Reading from the N-terminus, the 251-residue chain is MKNYLFEVCTNSVESCIAAQEGGANRVELCAGIPEGGTTPSYGEIAMAREVLTTTRLHVIIRPRGGDFLYSPVEVKTMLKDIEMARQLGADGVVFGCLTTNGGIDVPVMKQLMEASKGLSVTFHRAFDVCRDASEALEQIIDLGCDRILTSGQQATAELGIPLLKELRERANGRITLLAGCGVNEKNICRIAKETGIQEFHFSARESIKSGMEYKNEAVSMGGTVHISEYERNVTTVKRVKDTIESITSSL.

Belongs to the CutC family.

The protein localises to the cytoplasm. This chain is PF03932 family protein CutC, found in Bacteroides fragilis (strain ATCC 25285 / DSM 2151 / CCUG 4856 / JCM 11019 / LMG 10263 / NCTC 9343 / Onslow / VPI 2553 / EN-2).